A 591-amino-acid polypeptide reads, in one-letter code: Metalloendopeptidase OPG085 (591 aa).

Position 41 (His41) interacts with Zn(2+). Glu44 is an active-site residue. His45 lines the Zn(2+) pocket.

This sequence belongs to the peptidase M44 family. Requires Zn(2+) as cofactor. Post-translationally, undergoes proteolytic processing during the course of infection. May be cleaved into 46 kDa and 22 kDa products (Potential).

Its subcellular location is the virion. In terms of biological role, probably involved in maturation of some viral proteins by processing them preferentially at Ala-Gly-|-Ser/Thr/Lys motifs. Does not seem to be responsible for the cleavage of major core proteins. The sequence is that of Metalloendopeptidase OPG085 (OPG085) from Homo sapiens (Human).